Consider the following 2429-residue polypeptide: Highly reducing polyketide synthase acrA (2429 aa).

The region spanning 4–436 (PEPIAIVGMG…GTNAHAIIES (433 aa)) is the Ketosynthase family 3 (KS3) domain. Residues Cys177, His314, and His356 each act as for beta-ketoacyl synthase activity in the active site. Residues 541 to 861 (VFTGQGAQWP…PYSGTLSRGQ (321 aa)) form a malonyl-CoA:ACP transacylase (MAT) domain region. The N-terminal hotdog fold stretch occupies residues 931–1068 (HPLLGVRSTE…GTVRVVLGPA (138 aa)). The dehydratase (DH) domain stretch occupies residues 931 to 1229 (HPLLGVRSTE…RCSSLTPPGP (299 aa)). Residues 931 to 1230 (HPLLGVRSTE…CSSLTPPGPR (300 aa)) enclose the PKS/mFAS DH domain. The active-site Proton acceptor; for dehydratase activity is the His963. The C-terminal hotdog fold stretch occupies residues 1082-1230 (VFHEVKTERF…CSSLTPPGPR (149 aa)). The active-site Proton donor; for dehydratase activity is Asp1141. Positions 1388 to 1577 (NGYMGRVAGQ…VNDFVDESKY (190 aa)) are methyltransferase (MT) domain. The segment at 2065-2235 (TYLLVGCTGG…ARGLAASVFH (171 aa)) is ketoreductase (KR) domain. A Carrier domain is found at 2351-2428 (EVDGVIQEAF…ELCREAASEV (78 aa)). Ser2388 carries the post-translational modification O-(pantetheine 4'-phosphoryl)serine.

Its pathway is secondary metabolite biosynthesis. Highly reducing polyketide synthase; part of the cluster that mediates the biosynthesis of acurin A, a highly reduced polyketide coupled to a serine via a peptide bond. The activities of the highly reducing polyketide synthase acrA and the nonribosomal peptide synthetase acrB are collectively responsible for the synthesis of the acurin A core structure with a heptaketide backbone produced by acrA covalently fused to a L-serine by acrB. After the formation of the PK-NRP hybrid product, it is detached from acrB by reductive release to set up the formation of the lactam ring by aldol condensation. The hydrolyase acrC then catalyzes water loss to generate a double bond in the ring. This double bond is probably reduced, which is followed by three oxidations at C-22 to generate the carboxylic acid moiety, involving probably the FAD-binding monooxygenase acrE and the cytochrome P450 monooxygenases acrD and acrF. Finally, a last methylation step performed by the O-methyltransferase acrG leads to the production of acurin A. The polypeptide is Highly reducing polyketide synthase acrA (Aspergillus aculeatus (strain ATCC 16872 / CBS 172.66 / WB 5094)).